Here is a 124-residue protein sequence, read N- to C-terminus: Small ribosomal subunit protein bS6 (124 aa).

A disordered region spans residues 96-124 (ETGPSPMMKEVQREEAKKSAATQPSEAQA). Residues 115–124 (AATQPSEAQA) show a composition bias toward polar residues.

This sequence belongs to the bacterial ribosomal protein bS6 family.

Binds together with bS18 to 16S ribosomal RNA. The polypeptide is Small ribosomal subunit protein bS6 (Paraburkholderia phytofirmans (strain DSM 17436 / LMG 22146 / PsJN) (Burkholderia phytofirmans)).